The primary structure comprises 240 residues: uncharacterized protein (240 aa).

This is an uncharacterized protein from Bacillus subtilis (strain 168).